An 887-amino-acid chain; its full sequence is Lon protease homolog 2, peroxisomal (887 aa).

The region spanning 11–256 (LGILAFRNKV…KATELVDRHL (246 aa)) is the Lon N-terminal domain. Residues 72 to 101 (YPGGGTDSGERNVKSQPGLSDSRKADGKSQ) are disordered. Residue 409-416 (GPPGVGKT) participates in ATP binding. Residues 693–878 (VSNPGVSVGL…EVLEQAFEGG (186 aa)) enclose the Lon proteolytic domain. Catalysis depends on residues Ser-784 and Lys-827. Positions 885 to 887 (ARL) match the Microbody targeting signal motif.

The protein belongs to the peptidase S16 family.

The protein resides in the peroxisome matrix. It carries out the reaction Hydrolysis of proteins in presence of ATP.. Functionally, ATP-dependent serine protease that mediates the selective degradation of misfolded and unassembled polypeptides in the peroxisomal matrix. Necessary for type 2 peroxisome targeting signal (PTS2)-containing protein processing and facilitates peroxisome matrix protein import. The sequence is that of Lon protease homolog 2, peroxisomal from Spinacia oleracea (Spinach).